We begin with the raw amino-acid sequence, 341 residues long: Dehydration-responsive element-binding protein 2C (341 aa).

Residues 8–48 carry the Nuclear localization signal motif; sequence RKRKSRGTRDVAEILRQWREYNEQIEAESCIDGGGPKSIRK. The disordered stretch occupies residues 36-63; sequence SCIDGGGPKSIRKPPPKGSRKGCMKGKG. Residues 45–59 show a composition bias toward basic residues; that stretch reads SIRKPPPKGSRKGCM. The AP2/ERF DNA-binding region spans 71–128; sequence DYRGVRQRRWGKWVAEIREPDGGARLWLGTFSSSYEAALAYDEAAKAIYGQSARLNLP.

This sequence belongs to the AP2/ERF transcription factor family. ERF subfamily.

The protein localises to the nucleus. Functionally, transcriptional activator that binds specifically to the DNA sequence 5'-[AG]CCGAC-3'. Binding to the C-repeat/DRE element mediates high salinity- and abscisic acid-inducible transcription. The protein is Dehydration-responsive element-binding protein 2C (DREB2C) of Arabidopsis thaliana (Mouse-ear cress).